Reading from the N-terminus, the 127-residue chain is Small ribosomal subunit protein eS8 (127 aa).

Positions methionine 1–glutamate 31 are disordered.

This sequence belongs to the eukaryotic ribosomal protein eS8 family. As to quaternary structure, part of the 30S ribosomal subunit.

This chain is Small ribosomal subunit protein eS8 (rps8e), found in Thermoplasma acidophilum (strain ATCC 25905 / DSM 1728 / JCM 9062 / NBRC 15155 / AMRC-C165).